Here is a 98-residue protein sequence, read N- to C-terminus: Integration host factor subunit beta (98 aa).

Belongs to the bacterial histone-like protein family. In terms of assembly, heterodimer of an alpha and a beta chain.

This protein is one of the two subunits of integration host factor, a specific DNA-binding protein that functions in genetic recombination as well as in transcriptional and translational control. The polypeptide is Integration host factor subunit beta (Gluconacetobacter diazotrophicus (strain ATCC 49037 / DSM 5601 / CCUG 37298 / CIP 103539 / LMG 7603 / PAl5)).